We begin with the raw amino-acid sequence, 229 residues long: Orotidine 5'-phosphate decarboxylase (229 aa).

Substrate-binding positions include Asp-10, Lys-32, 59–68, Thr-119, Arg-180, Gln-189, Gly-209, and Arg-210; that span reads DLKFHDIPNT. Residue Lys-61 is the Proton donor of the active site.

Belongs to the OMP decarboxylase family. Type 1 subfamily. Homodimer.

It catalyses the reaction orotidine 5'-phosphate + H(+) = UMP + CO2. The protein operates within pyrimidine metabolism; UMP biosynthesis via de novo pathway; UMP from orotate: step 2/2. In terms of biological role, catalyzes the decarboxylation of orotidine 5'-monophosphate (OMP) to uridine 5'-monophosphate (UMP). In Legionella pneumophila (strain Lens), this protein is Orotidine 5'-phosphate decarboxylase.